A 112-amino-acid chain; its full sequence is Large ribosomal subunit protein eL30z (112 aa).

Belongs to the eukaryotic ribosomal protein eL30 family.

This Arabidopsis thaliana (Mouse-ear cress) protein is Large ribosomal subunit protein eL30z (RPL30A).